The chain runs to 77 residues: Conotoxin LiC42 (77 aa).

The N-terminal stretch at 1–22 (MKLTCVLIIAVLFLTASQLITA) is a signal peptide. Residues 23–47 (DYSRDKQEYGAERLRDAMGKFKGSR) constitute a propeptide that is removed on maturation. 3 cysteine pairs are disulfide-bonded: Cys49–Cys62, Cys56–Cys67, and Cys61–Cys76.

It belongs to the conotoxin O1 superfamily. As to expression, expressed by the venom duct.

The protein localises to the secreted. In Conus lividus (Livid cone), this protein is Conotoxin LiC42.